We begin with the raw amino-acid sequence, 296 residues long: Fructose-bisphosphate aldolase class 1 (296 aa).

E175 (proton acceptor) is an active-site residue. K212 acts as the Schiff-base intermediate with dihydroxyacetone-P in catalysis.

Belongs to the class I fructose-bisphosphate aldolase family.

It carries out the reaction beta-D-fructose 1,6-bisphosphate = D-glyceraldehyde 3-phosphate + dihydroxyacetone phosphate. The protein operates within carbohydrate degradation; glycolysis; D-glyceraldehyde 3-phosphate and glycerone phosphate from D-glucose: step 4/4. This is Fructose-bisphosphate aldolase class 1 from Staphylococcus aureus (strain bovine RF122 / ET3-1).